The primary structure comprises 419 residues: Zinc finger protein Pegasus (419 aa).

C2H2-type zinc fingers lie at residues 79 to 101, 107 to 129, and 135 to 158; these read LKCR…IRIH, HRCH…MRSH, and YKCE…RRRH. Disordered regions lie at residues 203-255 and 310-360; these read LQKP…DQDM and SVNT…TPVQ. Residues 208–228 are compositionally biased toward basic and acidic residues; the sequence is SEQHHLGDFTHDLPPHAHLHQ. Composition is skewed to polar residues over residues 310–320 and 341–360; these read SVNTAQASSPI and ERTS…TPVQ. 2 consecutive C2H2-type zinc fingers follow at residues 366–388 and 394–418; these read HHCP…MGCH and FQCN…RGQH.

The protein belongs to the Ikaros C2H2-type zinc-finger protein family. As to quaternary structure, probably self-associates.

It localises to the nucleus. Functionally, transcriptional repressor that binds the core 5'GNNTGTNG-3' DNA consensus sequence. The sequence is that of Zinc finger protein Pegasus (ikzf5) from Danio rerio (Zebrafish).